Reading from the N-terminus, the 319-residue chain is Vesicle-associated membrane protein-associated protein scs22 (319 aa).

The 121-residue stretch at 1-121 (MALECDSTIV…SERKIRCVYS (121 aa)) folds into the MSP domain. Residues 1–298 (MALECDSTIV…GAKVVPQIHN (298 aa)) are Cytoplasmic-facing. The segment covering 127 to 150 (ANAHANAHHQPAQTTTTSIPTSAT) has biased composition (low complexity). Residues 127 to 244 (ANAHANAHHQ…TTSPNNENNA (118 aa)) are disordered. 3 stretches are compositionally biased toward polar residues: residues 151–165 (DNYT…QSYS), 185–201 (STAT…SAVS), and 231–244 (SVPT…ENNA). Thr236 carries the post-translational modification Phosphothreonine. Ser237 and Ser281 each carry phosphoserine. Residues 299 to 319 (TVTVQTAFLLAIICFLIGLLF) traverse the membrane as a helical; Anchor for type IV membrane protein segment.

This sequence belongs to the VAMP-associated protein (VAP) (TC 9.B.17) family. In terms of assembly, interacts with epr1.

Its subcellular location is the endoplasmic reticulum membrane. Functionally, vesicle-associated membrane protein-associated protein (VAP) implicated in maintaining the cortical endoplasmic reticulum (ER)-plasma membrane (PM) attachment. ER-PM contacts function to modulate the distribution of contractile ring components to ensure robust ring assembly. ER-PM contacts function also in controlling exocytosis and maintenance of cell polarity regulating cell shape. VAPs play an important role in regulating eisosome assembly. VAPs also contribute to ER-phagy by tethering atg8 to the ER membrane, but also by maintaining the ER-plasma membrane contact. The chain is Vesicle-associated membrane protein-associated protein scs22 (scs22) from Schizosaccharomyces pombe (strain 972 / ATCC 24843) (Fission yeast).